The following is a 125-amino-acid chain: Desulfoferrodoxin (125 aa).

The Fe cation site is built by histidine 49, histidine 69, histidine 75, cysteine 115, and histidine 118.

It belongs to the desulfoferrodoxin family. Cu(2+) is required as a cofactor.

It carries out the reaction reduced [rubredoxin] + superoxide + 2 H(+) = oxidized [rubredoxin] + H2O2. Its function is as follows. Catalyzes the reduction of superoxide to hydrogen peroxide, using electrons from NADH and NADH:rubredoxin oxidoreductase (NROR) and rubredoxin (Rd) as electron transport intermediaries between NADH and Dfx. Is a key factor in the superoxide reductase dependent part of a pathway for detoxification of reactive oxygen species (ROS) in C.acetobutylicum, an obligate anaerobic bacterium. The sequence is that of Desulfoferrodoxin (dfx) from Clostridium acetobutylicum (strain ATCC 824 / DSM 792 / JCM 1419 / IAM 19013 / LMG 5710 / NBRC 13948 / NRRL B-527 / VKM B-1787 / 2291 / W).